The sequence spans 498 residues: Glycerol kinase (498 aa).

ADP is bound at residue Thr14. ATP is bound by residues Thr14 and Thr15. Thr14 is a binding site for sn-glycerol 3-phosphate. Residue Arg18 participates in ADP binding. Sn-glycerol 3-phosphate is bound by residues Arg84, Glu85, Tyr136, and Asp246. Glycerol is bound by residues Arg84, Glu85, Tyr136, Asp246, and Gln247. The ADP site is built by Thr268 and Gly311. Residues Thr268, Gly311, Gln315, and Gly412 each contribute to the ATP site. Residues Gly412 and Asn416 each contribute to the ADP site.

It belongs to the FGGY kinase family.

It carries out the reaction glycerol + ATP = sn-glycerol 3-phosphate + ADP + H(+). It functions in the pathway polyol metabolism; glycerol degradation via glycerol kinase pathway; sn-glycerol 3-phosphate from glycerol: step 1/1. Its activity is regulated as follows. Inhibited by fructose 1,6-bisphosphate (FBP). Its function is as follows. Key enzyme in the regulation of glycerol uptake and metabolism. Catalyzes the phosphorylation of glycerol to yield sn-glycerol 3-phosphate. The chain is Glycerol kinase from Leptospira biflexa serovar Patoc (strain Patoc 1 / Ames).